We begin with the raw amino-acid sequence, 435 residues long: Estrogen-related receptor gamma (435 aa).

Positions 1–64 (MSNKDRHIDS…GLDSPPLYPS (64 aa)) are disordered. The span at 10–29 (SSCSSFIKTEPSSPASLTDS) shows a compositional bias: polar residues. Low complexity predominate over residues 34–47 (SPGGSSDASGSYSS). The segment at residues 102 to 177 (KRLCLVCGDI…VGMLKEGVRL (76 aa)) is a DNA-binding region (nuclear receptor). 2 NR C4-type zinc fingers span residues 105–125 (CLVC…CEAC) and 141–160 (CPAT…CQAC). One can recognise an NR LBD domain in the interval 210-434 (PYNKIVSHLL…KLFSEMLEAK (225 aa)).

This sequence belongs to the nuclear hormone receptor family. NR3 subfamily. In terms of assembly, homodimer. Interacts with NRIP1, NCOA1 and NCOR2. Binds TLE1, PNRC1 and PNRC2. Binds GRIP1. In terms of processing, acetylated by PCAF/KAT2 (in vitro).

The protein localises to the nucleus. In terms of biological role, orphan receptor that acts as a transcription activator in the absence of bound ligand. Binds specifically to an estrogen response element and activates reporter genes controlled by estrogen response elements. Induces the expression of PERM1 in the skeletal muscle. This is Estrogen-related receptor gamma (ESRRG) from Pongo abelii (Sumatran orangutan).